The primary structure comprises 184 residues: ATP synthase subunit b, chloroplastic (184 aa).

The helical transmembrane segment at 27–49 (LATNPINLSVVFGVLIFFGKGVL) threads the bilayer.

This sequence belongs to the ATPase B chain family. As to quaternary structure, F-type ATPases have 2 components, F(1) - the catalytic core - and F(0) - the membrane proton channel. F(1) has five subunits: alpha(3), beta(3), gamma(1), delta(1), epsilon(1). F(0) has four main subunits: a(1), b(1), b'(1) and c(10-14). The alpha and beta chains form an alternating ring which encloses part of the gamma chain. F(1) is attached to F(0) by a central stalk formed by the gamma and epsilon chains, while a peripheral stalk is formed by the delta, b and b' chains.

The protein localises to the plastid. It localises to the chloroplast thylakoid membrane. Its function is as follows. F(1)F(0) ATP synthase produces ATP from ADP in the presence of a proton or sodium gradient. F-type ATPases consist of two structural domains, F(1) containing the extramembraneous catalytic core and F(0) containing the membrane proton channel, linked together by a central stalk and a peripheral stalk. During catalysis, ATP synthesis in the catalytic domain of F(1) is coupled via a rotary mechanism of the central stalk subunits to proton translocation. Component of the F(0) channel, it forms part of the peripheral stalk, linking F(1) to F(0). This is ATP synthase subunit b, chloroplastic from Olimarabidopsis pumila (Dwarf rocket).